The primary structure comprises 705 residues: Elongation factor G (705 aa).

Positions 8 to 294 (ELYRNFGIMA…SVIDYLPSPL (287 aa)) constitute a tr-type G domain. Residues 17-24 (AHIDAGKT), 92-96 (DTPGH), and 146-149 (NKMD) each bind GTP.

This sequence belongs to the TRAFAC class translation factor GTPase superfamily. Classic translation factor GTPase family. EF-G/EF-2 subfamily.

The protein localises to the cytoplasm. Its function is as follows. Catalyzes the GTP-dependent ribosomal translocation step during translation elongation. During this step, the ribosome changes from the pre-translocational (PRE) to the post-translocational (POST) state as the newly formed A-site-bound peptidyl-tRNA and P-site-bound deacylated tRNA move to the P and E sites, respectively. Catalyzes the coordinated movement of the two tRNA molecules, the mRNA and conformational changes in the ribosome. The sequence is that of Elongation factor G from Cereibacter sphaeroides (strain KD131 / KCTC 12085) (Rhodobacter sphaeroides).